A 258-amino-acid chain; its full sequence is Indole-3-glycerol phosphate synthase (258 aa).

The protein belongs to the TrpC family.

The catalysed reaction is 1-(2-carboxyphenylamino)-1-deoxy-D-ribulose 5-phosphate + H(+) = (1S,2R)-1-C-(indol-3-yl)glycerol 3-phosphate + CO2 + H2O. The protein operates within amino-acid biosynthesis; L-tryptophan biosynthesis; L-tryptophan from chorismate: step 4/5. In Legionella pneumophila (strain Lens), this protein is Indole-3-glycerol phosphate synthase.